We begin with the raw amino-acid sequence, 398 residues long: Acetate kinase (398 aa).

Asn-8 is a binding site for Mg(2+). An ATP-binding site is contributed by Lys-15. Substrate is bound at residue Arg-89. Asp-146 acts as the Proton donor/acceptor in catalysis. Residues His-206–Gly-210, Asp-281–Arg-283, and Gly-329–Asn-333 each bind ATP. Glu-383 contacts Mg(2+).

Belongs to the acetokinase family. In terms of assembly, homodimer. Mg(2+) is required as a cofactor. Mn(2+) serves as cofactor.

It localises to the cytoplasm. The catalysed reaction is acetate + ATP = acetyl phosphate + ADP. It functions in the pathway metabolic intermediate biosynthesis; acetyl-CoA biosynthesis; acetyl-CoA from acetate: step 1/2. Functionally, catalyzes the formation of acetyl phosphate from acetate and ATP. Can also catalyze the reverse reaction. This Macrococcus caseolyticus (strain JCSC5402) (Macrococcoides caseolyticum) protein is Acetate kinase.